Consider the following 387-residue polypeptide: EARP and GARP complex-interacting protein 1 (387 aa).

Met1 is subject to N-acetylmethionine. WD repeat units follow at residues 4-48 (DAPV…IIDF), 55-101 (INKN…VWRM), 124-164 (ELLC…LWDL), 172-214 (VLAS…GWDT), 219-258 (QIYC…FWDT), and 263-302 (EPVK…LSNM). The disordered stretch occupies residues 310-335 (FGHLVDDDDISDQEDHRSEEKSKEPL). Residue Ser320 is modified to Phosphoserine. Residues 322–335 (QEDHRSEEKSKEPL) show a composition bias toward basic and acidic residues. Residues 338-379 (NVIATYEEHEDSVYAVDWSSADPWLFASLSYDGRLVINRVPR) form a WD 7 repeat.

The protein belongs to the WD repeat EIPR1 family. Interacts with two multisubunit tethering complexes: EARP composed of VPS50, VPS51, VPS52 and VPS53 subunits and GARP complex composed of VPS51, VPS52, VPS53 and VPS54 subunits. Interacts with SNAP29.

The protein localises to the golgi apparatus. It is found in the trans-Golgi network. In terms of biological role, acts as a component of endosomal retrieval machinery that is involved in protein transport from early endosomes to either recycling endosomes or the trans-Golgi network. Mediates the recruitment of Golgi-associated retrograde protein (GARP) complex to the trans-Golgi network and controls early endosome-to-Golgi transport of internalized protein. Promotes the recycling of internalized transferrin receptor (TFRC) to the plasma membrane through interaction with endosome-associated recycling protein (EARP) complex. Controls proper insulin distribution and secretion, and retention of cargo in mature dense core vesicles. Required for the stability of the endosome-associated retrograde protein (EARP) complex subunits and for proper localization and association of EARP with membranes. This is EARP and GARP complex-interacting protein 1 from Homo sapiens (Human).